The primary structure comprises 718 residues: MTSNDPVRRAETLREQIRYHNYRYYVLDEPVISDAEYDALMRELRELEAAHPELVTPDSPTQRVGAPPSEQFAKVQHVVPMLSLANAFDEAGMRAWYDRTLRLLGSDAQVAFVVEPKIDGLAVTLIYRNGVLVRGATRGDGEIGEDVTANLRTISSIPLRLGSFANDDSAPTNPTAVPPLLEVRGEVYMRIADFMRLNEQLAVAGEKVAANPRNAAAGSLRQKDPAVTSRRPLRFFAYGVGQVEGVALQTQWETLHFLRALGFPVNRDARRFERFEEALAYCREWMTRRDELEYEVDGVVVKIDSFAQQAELGVVGRDPRWAIAFKFPAREAVSRLLDIVVNVGRTGVITPNAVIEPVNIGGVTVRNASLHNADYIAERDIRIGDYVIVKRAGDVIPHIVGPVVARRDGSERVWQMPATCPACGTPLERAEGEVAYRCPNFGICPAQITRRIEHFVSRSAMDIAGIGEKQVQLFVERGWVQDVADLYTLTPEHFHGIEGYGPKRIANLLNAIAESKDRPLHRLIVGLGIRYVGEVVAQILADHFGSLDALAAASADEIDDLEGIGPAIAASVAEYFARPESKALIAKLKRVGVRTEAKGPAVAPKGDALAGKTFVITGTLPSMSREEAGALIVAHGGRVSGSVSKKTDYLVVGSEPGGTKVAKAQELGIPTLDEAGLLALIGANDRSAPAASNNNQNAASATSRGTMAEVQQLGLNLE.

Residues 34–38 (DAEYD), 83–84 (SL), and E115 contribute to the NAD(+) site. K117 acts as the N6-AMP-lysine intermediate in catalysis. NAD(+) is bound by residues R138, E186, K302, and K326. The Zn(2+) site is built by C420, C423, C438, and C444. Positions 604–694 (PKGDALAGKT…DRSAPAASNN (91 aa)) constitute a BRCT domain.

It belongs to the NAD-dependent DNA ligase family. LigA subfamily. Mg(2+) serves as cofactor. Requires Mn(2+) as cofactor.

The enzyme catalyses NAD(+) + (deoxyribonucleotide)n-3'-hydroxyl + 5'-phospho-(deoxyribonucleotide)m = (deoxyribonucleotide)n+m + AMP + beta-nicotinamide D-nucleotide.. DNA ligase that catalyzes the formation of phosphodiester linkages between 5'-phosphoryl and 3'-hydroxyl groups in double-stranded DNA using NAD as a coenzyme and as the energy source for the reaction. It is essential for DNA replication and repair of damaged DNA. This chain is DNA ligase, found in Roseiflexus castenholzii (strain DSM 13941 / HLO8).